We begin with the raw amino-acid sequence, 384 residues long: Involucrin (384 aa).

The disordered stretch occupies residues 1–384; that stretch reads MSQQHTLPVT…LPEQPQEPEV (384 aa). Basic and acidic residues-rich tracts occupy residues 56 to 65 and 80 to 134; these read PSKHEEKGTD and PELH…ELHL. Positions 137-146 are enriched in low complexity; sequence QQQQESQEQE. The segment covering 179–208 has biased composition (basic and acidic residues); that stretch reads KQREPQESQEQRLHLGKEQESQEQRLHLGE. The segment covering 239-267 has biased composition (low complexity); sequence PEQRLQLLPQGPQEQELHLGKQQQQQESQ. 2 stretches are compositionally biased toward basic and acidic residues: residues 268–308 and 315–336; these read QHQE…KKLL and EAVK…KEQL.

Belongs to the involucrin family. Directly or indirectly cross-linked to cornifelin (CNFN). In terms of processing, substrate of transglutaminase. Specific glutamines or lysines are cross-linked to keratins, desmoplakin and to inter involucrin molecules. Keratinocytes of epidermis and other stratified squamous epithelia.

The protein resides in the cytoplasm. In terms of biological role, part of the insoluble cornified cell envelope (CE) of stratified squamous epithelia. The polypeptide is Involucrin (IVL) (Otolemur crassicaudatus (Brown greater galago)).